The chain runs to 509 residues: uncharacterized protein (509 aa).

The G domain occupies 108 to 225 (GKSSLCNLLA…KRHKPLFPVI (118 aa)).

This is an uncharacterized protein from Acinetobacter baylyi (strain ATCC 33305 / BD413 / ADP1).